The primary structure comprises 318 residues: Deoxyribose-phosphate aldolase (318 aa).

The active-site Proton donor/acceptor is D155. Catalysis depends on K218, which acts as the Schiff-base intermediate with acetaldehyde. K254 functions as the Proton donor/acceptor in the catalytic mechanism.

The protein belongs to the DeoC/FbaB aldolase family. DeoC type 2 subfamily. As to quaternary structure, interacts with YBX1. Mainly expressed in liver, lung and colon.

It is found in the cytoplasm. Its subcellular location is the cytoplasmic granule. The protein localises to the nucleus. The enzyme catalyses 2-deoxy-D-ribose 5-phosphate = D-glyceraldehyde 3-phosphate + acetaldehyde. The protein operates within carbohydrate degradation; 2-deoxy-D-ribose 1-phosphate degradation; D-glyceraldehyde 3-phosphate and acetaldehyde from 2-deoxy-alpha-D-ribose 1-phosphate: step 2/2. In terms of biological role, catalyzes a reversible aldol reaction between acetaldehyde and D-glyceraldehyde 3-phosphate to generate 2-deoxy-D-ribose 5-phosphate. Participates in stress granule (SG) assembly. May allow ATP production from extracellular deoxyinosine in conditions of energy deprivation. The polypeptide is Deoxyribose-phosphate aldolase (DERA) (Homo sapiens (Human)).